A 569-amino-acid chain; its full sequence is Glutamate--tRNA ligase (569 aa).

The 'HIGH' region signature appears at 110–120 (PNPNGPPTLGS).

It belongs to the class-I aminoacyl-tRNA synthetase family. Glutamate--tRNA ligase type 2 subfamily.

Its subcellular location is the cytoplasm. The catalysed reaction is tRNA(Glu) + L-glutamate + ATP = L-glutamyl-tRNA(Glu) + AMP + diphosphate. Catalyzes the attachment of glutamate to tRNA(Glu) in a two-step reaction: glutamate is first activated by ATP to form Glu-AMP and then transferred to the acceptor end of tRNA(Glu). The polypeptide is Glutamate--tRNA ligase (Methanococcoides burtonii (strain DSM 6242 / NBRC 107633 / OCM 468 / ACE-M)).